Here is a 177-residue protein sequence, read N- to C-terminus: 18.9 kDa heat shock protein (177 aa).

Residues 1-35 (MSMITSMLGRKQNAQQKGGGGGGRTGGGGGGEIEP) are disordered. The span at 17 to 32 (KGGGGGGRTGGGGGGE) shows a compositional bias: gly residues. The sHSP domain maps to 63–177 (AAGVPSTASM…PHARIIPITN (115 aa)).

This sequence belongs to the small heat shock protein (HSP20) family. In terms of assembly, may form oligomeric structures.

The protein resides in the cytoplasm. This chain is 18.9 kDa heat shock protein (HSP18.9), found in Oryza sativa subsp. japonica (Rice).